Consider the following 254-residue polypeptide: Ribonuclease HII (254 aa).

An RNase H type-2 domain is found at 70 to 254 (QAIAGIDEVG…TFEPIKSMYE (185 aa)). Asp76, Glu77, and Asp168 together coordinate a divalent metal cation.

Belongs to the RNase HII family. Requires Mn(2+) as cofactor. It depends on Mg(2+) as a cofactor.

The protein resides in the cytoplasm. The enzyme catalyses Endonucleolytic cleavage to 5'-phosphomonoester.. Its function is as follows. Endonuclease that specifically degrades the RNA of RNA-DNA hybrids. This chain is Ribonuclease HII, found in Streptococcus sanguinis (strain SK36).